Reading from the N-terminus, the 333-residue chain is Nuclear egress protein 1 (333 aa).

A disordered region spans residues 45 to 64 (SRRYKSVSRSGPSMRVRSRT). The segment at 128–251 (CLSLSGMGYH…YVIFPGKSVH (124 aa)) adopts a CCCH-type zinc-finger fold.

This sequence belongs to the herpesviridae NEC1 protein family. As to quaternary structure, forms a heterohexameric complex with NEC2. Interacts with capsid vertex specific component 2/CVC2; this interaction directs the capsid to the host inner nuclear membrane to initiate budding. Post-translationally, phosphorylated at serine residues in the N-terminus. This phosphorylation regulates the localization within the inner nuclear membrane.

It is found in the host nucleus inner membrane. Plays an essential role in virion nuclear egress, the first step of virion release from infected cell. Within the host nucleus, NEC1 interacts with the newly formed capsid through the vertexes and directs it to the inner nuclear membrane by associating with NEC2. Induces the budding of the capsid at the inner nuclear membrane as well as its envelopment into the perinuclear space. There, the NEC1/NEC2 complex promotes the fusion of the enveloped capsid with the outer nuclear membrane and the subsequent release of the viral capsid into the cytoplasm where it will reach the secondary budding sites in the host Golgi or trans-Golgi network. This chain is Nuclear egress protein 1, found in Varicella-zoster virus (strain Dumas) (HHV-3).